A 146-amino-acid polypeptide reads, in one-letter code: Vascular endothelial growth factor isoform GtVF (146 aa).

Residues 1 to 24 (MAAYLLAVAILFCIQGWPSGTVQG) form the signal peptide. The residue at position 25 (glutamine 25) is a Pyrrolidone carboxylic acid. Disulfide bonds link cysteine 38–cysteine 80, cysteine 69–cysteine 115, and cysteine 73–cysteine 117. The disordered stretch occupies residues 116–146 (ECRPRSRSGVDSGKRKRNPEEGEPRAKFPFV). Over residues 133–146 (NPEEGEPRAKFPFV) the composition is skewed to basic and acidic residues.

The protein belongs to the PDGF/VEGF growth factor family. Snake venom VEGF subfamily. As to quaternary structure, homodimer; disulfide-linked. As to expression, expressed by the venom gland.

It is found in the secreted. Snake venom VEGFs that may contribute to venom dispersion and prey subjugation by inducing vascular permeability and hypotension. This protein induces an increase in capillary permeability after intradermal injection, in a VEGFR-2 (KDR) dependent manner. In addition, it provokes a drastic hypotensive effect after intravenous injection. The hypotension is mediated by nitric oxide (NO), which is produced by VEGF-activated endothelium NO synthase. Also induces angiogenesis in vitro. Unlike other crotalid VEGFs, this protein probably interacts with VEGF receptor-2 (KDR). This chain is Vascular endothelial growth factor isoform GtVF, found in Gloydius tsushimaensis (Tsushima Island pitviper).